A 293-amino-acid chain; its full sequence is Ribosomal protein L11 methyltransferase (293 aa).

S-adenosyl-L-methionine is bound by residues Thr-145, Gly-166, Asp-188, and Asn-230.

This sequence belongs to the methyltransferase superfamily. PrmA family.

The protein localises to the cytoplasm. It catalyses the reaction L-lysyl-[protein] + 3 S-adenosyl-L-methionine = N(6),N(6),N(6)-trimethyl-L-lysyl-[protein] + 3 S-adenosyl-L-homocysteine + 3 H(+). Methylates ribosomal protein L11. In Actinobacillus pleuropneumoniae serotype 3 (strain JL03), this protein is Ribosomal protein L11 methyltransferase.